Reading from the N-terminus, the 191-residue chain is Small ribosomal subunit protein uS7 (191 aa).

Residues 56 to 80 (NKSGEQGDGDGEGGGKAGGIKKRSL) are disordered.

This sequence belongs to the universal ribosomal protein uS7 family. Part of the 30S ribosomal subunit. Contacts proteins S9 and S11.

Its function is as follows. One of the primary rRNA binding proteins, it binds directly to 16S rRNA where it nucleates assembly of the head domain of the 30S subunit. Is located at the subunit interface close to the decoding center, probably blocks exit of the E-site tRNA. This chain is Small ribosomal subunit protein uS7, found in Coxiella burnetii (strain CbuG_Q212) (Coxiella burnetii (strain Q212)).